The primary structure comprises 310 residues: Bis(hydroxyethyl) terephthalate hydrolase (310 aa).

Residues 1 to 48 (MQQNPHTHAAPGAARPVLRGVRRRLAAVTAAVAAVLVLGTLTGPGAQA) constitute a signal peptide (tat-type signal). Phenylalanine 111 serves as a coordination point for bis(2-hydroxyethyl) terephthalate. Residue serine 179 is the Nucleophile of the active site. Positions 180 and 204 each coordinate bis(2-hydroxyethyl) terephthalate. Residues aspartate 225 and histidine 257 each act as charge relay system in the active site. Cysteine 290 and cysteine 306 are disulfide-bonded.

Belongs to the AB hydrolase superfamily. In terms of processing, predicted to be exported by the Tat system. The position of the signal peptide cleavage has not been experimentally proven.

Its subcellular location is the secreted. It catalyses the reaction bis(2-hydroxyethyl) terephthalate + H2O = 4-[(2-hydroxyethoxy)carbonyl]benzoate + ethylene glycol + H(+). Its function is as follows. Catalyzes the degradation of bis(hydroxyethyl) terephthalate (BHET), a derived-oligomer of the plastic poly(ethylene terephthalate) (PET), hydrolyzing BHET to mono(2-hydroxyethyl) terephthalate (MHET). Shows no activity against PET. The sequence is that of Bis(hydroxyethyl) terephthalate hydrolase from Streptomyces coelicolor (strain ATCC BAA-471 / A3(2) / M145).